The chain runs to 338 residues: Phosphatidate cytidylyltransferase, mitochondrial (338 aa).

This sequence belongs to the TAM41 family. The cofactor is Mg(2+).

The protein localises to the mitochondrion inner membrane. It carries out the reaction a 1,2-diacyl-sn-glycero-3-phosphate + CTP + H(+) = a CDP-1,2-diacyl-sn-glycerol + diphosphate. It functions in the pathway phospholipid metabolism; CDP-diacylglycerol biosynthesis; CDP-diacylglycerol from sn-glycerol 3-phosphate: step 3/3. In terms of biological role, catalyzes the conversion of phosphatidic acid (PA) to CDP-diacylglycerol (CDP-DAG), an essential intermediate in the synthesis of phosphatidylglycerol, cardiolipin and phosphatidylinositol. The polypeptide is Phosphatidate cytidylyltransferase, mitochondrial (tamm41) (Xenopus laevis (African clawed frog)).